We begin with the raw amino-acid sequence, 323 residues long: Oligodendrocyte transcription factor 2 (323 aa).

Polar residues-rich tracts occupy residues 1–13 (MDSD…SRPS) and 27–45 (KGSS…STPS). A disordered region spans residues 1–107 (MDSDASLVSS…KKQMTEPELQ (107 aa)). The segment covering 76 to 93 (KSSSSSTSSSTSSAAASS) has biased composition (low complexity). The bHLH domain occupies 108–162 (QLRLKINSRERKRMHDLNIAMDGLREVMPYAHGPSVRKLSKIATLLLARNYILML).

Interacts with NKX2-2. Interacts with ZNF488. In terms of tissue distribution, expressed in the brain, in oligodendrocytes. Strongly expressed in oligodendrogliomas, while expression is weak to moderate in astrocytomas. Expression in glioblastomas highly variable.

Its subcellular location is the nucleus. It localises to the cytoplasm. Its function is as follows. Required for oligodendrocyte and motor neuron specification in the spinal cord, as well as for the development of somatic motor neurons in the hindbrain. Functions together with ZNF488 to promote oligodendrocyte differentiation. Cooperates with OLIG1 to establish the pMN domain of the embryonic neural tube. Antagonist of V2 interneuron and of NKX2-2-induced V3 interneuron development. The chain is Oligodendrocyte transcription factor 2 (OLIG2) from Homo sapiens (Human).